We begin with the raw amino-acid sequence, 421 residues long: Glutamate dehydrogenase (421 aa).

Lys105 is an active-site residue. 220–226 is an NAD(+) binding site; that stretch reads GYGNAGY.

The protein belongs to the Glu/Leu/Phe/Val dehydrogenases family. In terms of assembly, homohexamer.

The protein resides in the cytoplasm. It localises to the chromosome. The catalysed reaction is L-glutamate + NAD(+) + H2O = 2-oxoglutarate + NH4(+) + NADH + H(+). It catalyses the reaction L-glutamate + NADP(+) + H2O = 2-oxoglutarate + NH4(+) + NADPH + H(+). This is Glutamate dehydrogenase (gdhA) from Thermococcus kodakarensis (strain ATCC BAA-918 / JCM 12380 / KOD1) (Pyrococcus kodakaraensis (strain KOD1)).